Reading from the N-terminus, the 342-residue chain is Prostasin (342 aa).

A signal peptide spans 1 to 29 (MAPRVGLGLGQLEAVTILLLLGLLQSGIR). The propeptide at 30–32 (ADG) is activation peptide. Cystine bridges form between Cys37–Cys154 and Cys70–Cys86. The Peptidase S1 domain maps to 45-286 (ITGGGSAKPG…YASWIHHHVA (242 aa)). The active-site Charge relay system is His85. The N-linked (GlcNAc...) asparagine glycan is linked to Asn110. Asp134 acts as the Charge relay system in catalysis. Asn159 is a glycosylation site (N-linked (GlcNAc...) asparagine). Cystine bridges form between Cys168-Cys244, Cys201-Cys223, and Cys234-Cys262. The active-site Charge relay system is Ser238. The chain crosses the membrane as a helical span at residues 320 to 340 (LLRPVLFLPLGLTLGLLSLWL). The propeptide occupies 323 to 342 (PVLFLPLGLTLGLLSLWLEH).

This sequence belongs to the peptidase S1 family. In terms of assembly, heterodimer of two chains, light and heavy, held by a disulfide bond.

It is found in the cell membrane. The protein localises to the secreted. It localises to the extracellular space. Functionally, possesses a trypsin-like cleavage specificity with a preference for poly-basic substrates. Stimulates epithelial sodium channel (ENaC) activity through activating cleavage of the gamma subunits (SCNN1G). The sequence is that of Prostasin (Prss8) from Mus musculus (Mouse).